Consider the following 613-residue polypeptide: Dihydroxy-acid dehydratase (613 aa).

A Mg(2+)-binding site is contributed by D81. C122 lines the [2Fe-2S] cluster pocket. Mg(2+)-binding residues include D123 and K124. K124 carries the N6-carboxylysine modification. C195 is a [2Fe-2S] cluster binding site. E491 contributes to the Mg(2+) binding site. S517 acts as the Proton acceptor in catalysis.

The protein belongs to the IlvD/Edd family. In terms of assembly, homodimer. Requires [2Fe-2S] cluster as cofactor. The cofactor is Mg(2+).

The catalysed reaction is (2R)-2,3-dihydroxy-3-methylbutanoate = 3-methyl-2-oxobutanoate + H2O. The enzyme catalyses (2R,3R)-2,3-dihydroxy-3-methylpentanoate = (S)-3-methyl-2-oxopentanoate + H2O. The protein operates within amino-acid biosynthesis; L-isoleucine biosynthesis; L-isoleucine from 2-oxobutanoate: step 3/4. It functions in the pathway amino-acid biosynthesis; L-valine biosynthesis; L-valine from pyruvate: step 3/4. Functions in the biosynthesis of branched-chain amino acids. Catalyzes the dehydration of (2R,3R)-2,3-dihydroxy-3-methylpentanoate (2,3-dihydroxy-3-methylvalerate) into 2-oxo-3-methylpentanoate (2-oxo-3-methylvalerate) and of (2R)-2,3-dihydroxy-3-methylbutanoate (2,3-dihydroxyisovalerate) into 2-oxo-3-methylbutanoate (2-oxoisovalerate), the penultimate precursor to L-isoleucine and L-valine, respectively. This is Dihydroxy-acid dehydratase from Aeromonas salmonicida (strain A449).